The primary structure comprises 435 residues: Histone acetyltransferase type B subunit 2 (435 aa).

5 WD repeats span residues 135–175, 188–228, 238–278, 284–324, and 328–368; these read NHAG…SKAP, GQTK…KQDP, GHSA…TAKA, GHNA…TKHH, and AHTN…AEQT. Positions 370–374 are interaction with the histone H4 N-terminus; that stretch reads DDAED. One copy of the WD 6 repeat lies at 385 to 425; it reads GHTSKVCDISWSPSSPWTIASASEDNILQVWEPSRHLRTPY.

Belongs to the WD repeat RBAP46/RBAP48/MSI1 family. As to quaternary structure, component of the HAT-B complex composed of at least HAT1 and HAT2. The HAT-B complex binds to histone H4 tail.

It localises to the cytoplasm. It is found in the nucleus. In terms of biological role, regulatory subunit of the histone acetylase B (HAT-B) complex. The complex acetylates 'Lys-12' of histone H4 which is required for telomeric silencing. The polypeptide is Histone acetyltransferase type B subunit 2 (HAT2) (Cryptococcus neoformans var. neoformans serotype D (strain B-3501A) (Filobasidiella neoformans)).